We begin with the raw amino-acid sequence, 299 residues long: UDP-N-acetylenolpyruvoylglucosamine reductase (299 aa).

An FAD-binding PCMH-type domain is found at 19–192 (LGGQALAEVR…AAVTLQLRRS (174 aa)). Arginine 169 is an active-site residue. Cysteine 221 acts as the Proton donor in catalysis. Glutamate 292 is a catalytic residue.

Belongs to the MurB family. FAD serves as cofactor.

It localises to the cytoplasm. The catalysed reaction is UDP-N-acetyl-alpha-D-muramate + NADP(+) = UDP-N-acetyl-3-O-(1-carboxyvinyl)-alpha-D-glucosamine + NADPH + H(+). It functions in the pathway cell wall biogenesis; peptidoglycan biosynthesis. In terms of biological role, cell wall formation. The protein is UDP-N-acetylenolpyruvoylglucosamine reductase of Oleidesulfovibrio alaskensis (strain ATCC BAA-1058 / DSM 17464 / G20) (Desulfovibrio alaskensis).